The sequence spans 491 residues: uncharacterized protein (491 aa).

W99 is a substrate binding site. N137 lines the Ca(2+) pocket. H138 contributes to the substrate binding site. Residues E177 and D190 each contribute to the Ca(2+) site. R219 lines the substrate pocket. 3 residues coordinate Ca(2+): D221, H225, and E245. D221 (nucleophile) is an active-site residue. 224-225 is a binding site for substrate; it reads KH. The active-site Proton donor is E245. Substrate contacts are provided by G249, H312, and R360.

This sequence belongs to the glycosyl hydrolase 13 family. The cofactor is Ca(2+).

Its subcellular location is the cytoplasm. The protein resides in the nucleus. This is an uncharacterized protein from Schizosaccharomyces pombe (strain 972 / ATCC 24843) (Fission yeast).